The following is a 311-amino-acid chain: MATRLLCWTALLLPIIAATAAASPLPEACPVPTAAEEILGPGGTCTTLDRRGDPVGVIEGDEVTLAKAITLLHMNKDDYIAVLFYASWCPFSQECKPNFEILASLFPSIRHFAFEESSIRPSIISRYGIHGFPTLFLLNSTMRVRYHGPRTVKSLAAFYRDVSGFDVSMTSEAVLHSVDGIELKKDAEQENCPFWWARSPEKILQQDTYLALATAFVILRLLYLLFPKIGSFAKRAWRRHTLFPNLVGVHEYFFTYLEQARHKFFRLYPSKRGNLQEGARNATAWASKSLASVSIGEPSTIGRTNSTNELR.

The signal sequence occupies residues 1–22; sequence MATRLLCWTALLLPIIAATAAA. One can recognise a Thioredoxin domain in the interval 23-164; the sequence is SPLPEACPVP…LAAFYRDVSG (142 aa). Asn-139 carries N-linked (GlcNAc...) asparagine glycosylation. A helical transmembrane segment spans residues 210 to 230; the sequence is LALATAFVILRLLYLLFPKIG. Residues Asn-281 and Asn-305 are each glycosylated (N-linked (GlcNAc...) asparagine).

The protein localises to the membrane. This is 5'-adenylylsulfate reductase-like 3 (APRL3) from Oryza sativa subsp. japonica (Rice).